A 1761-amino-acid chain; its full sequence is Nonribosomal peptide synthetase 6 (1761 aa).

Positions 63 to 468 are adenylation; sequence ERAALHPEKI…GRQDQQVKLR (406 aa). Residues 600–675 enclose the Carrier 1 domain; it reads EATTEMELKL…SMAEKAKPVS (76 aa). Ser-636 carries the post-translational modification O-(pantetheine 4'-phosphoryl)serine. Positions 712 to 1135 are condensation 1; the sequence is VEDVYPCTPL…AVLDPVEAQD (424 aa). Carrier domains follow at residues 1169-1242 and 1237-1313; these read SPNE…SNER and SASN…EEET. O-(pantetheine 4'-phosphoryl)serine is present on residues Ser-1203 and Ser-1274. Residues 1354–1677 form a condensation 2 region; it reads IYPTRPLQQL…ESVQWFDTVV (324 aa).

The protein belongs to the NRP synthetase family.

It participates in siderophore biosynthesis. In terms of biological role, nonribosomal peptide synthetase; part of the gene cluster that mediates the biosynthesis of hydroxamate-containing siderophores that play a critical role in virulence. Cochliobolus heterostrophus produces extracellular coprogen-type siderophores including coprogen, neocoprogen I and neocoprogen II, as well as the intracellular siderophore ferricrocin. The role of extracellular siderophores is to supply iron to the fungus during plant infection, and the intracellular ferricrocin is required for intracellular iron distribution and storage with a crucial role in ascus and ascospore development. SIDA2 catalyzes the conversion of L-ornithine to N(5)-hydroxyornithine, the first step in the biosynthesis of all hydroxamate-containing siderophores. The assembly of extracellular coprogen-type siderophores is then performed by the nonribosomal peptide synthetase (NRPS) NPS6 whereas the intracellular siderophore ferricrocin is assembled by NPS2. The polypeptide is Nonribosomal peptide synthetase 6 (Cochliobolus heterostrophus (strain C4 / ATCC 48331 / race T) (Southern corn leaf blight fungus)).